The following is a 93-amino-acid chain: UPF0298 protein lwe2074 (93 aa).

Belongs to the UPF0298 family.

The protein localises to the cytoplasm. The sequence is that of UPF0298 protein lwe2074 from Listeria welshimeri serovar 6b (strain ATCC 35897 / DSM 20650 / CCUG 15529 / CIP 8149 / NCTC 11857 / SLCC 5334 / V8).